The chain runs to 182 residues: Ribosome-recycling factor (182 aa).

It belongs to the RRF family.

It is found in the cytoplasm. Responsible for the release of ribosomes from messenger RNA at the termination of protein biosynthesis. May increase the efficiency of translation by recycling ribosomes from one round of translation to another. This is Ribosome-recycling factor from Nostoc sp. (strain PCC 7120 / SAG 25.82 / UTEX 2576).